A 270-amino-acid chain; its full sequence is Gap junction beta-3 protein (270 aa).

Residues 1–20 (MDWKKLQDLLSGVNQYSTAF) lie on the Cytoplasmic side of the membrane. The helical transmembrane segment at 21–40 (GRIWLSVVFVFRVLVYVVAA) threads the bilayer. Residues 41-75 (ERVWGDEQKDFDCNTRQPGCTNVCYDNFFPISNIR) lie on the Extracellular side of the membrane. Residues 76–98 (LWALQLIFVTCPSMLVILHVAYR) form a helical membrane-spanning segment. Residues 99-126 (EERERKHRQKHGEQCAKLYSHPGKKHGG) are Cytoplasmic-facing. Residues 127-149 (LWWTYLFSLIFKLIIELVFLYVL) form a helical membrane-spanning segment. At 150–188 (HTLWHGFTMPRLVQCASIVPCPNTVDCYIARPTEKKVFT) the chain is on the extracellular side. The chain crosses the membrane as a helical span at residues 189–211 (YFMVGASAVCIILTICEICYLIF). The Cytoplasmic portion of the chain corresponds to 212–270 (HRIMRGISKGKSTKSISSPKSSSRASTCRCHHKLLESGDPEADPASEKLQASAPSLTPI). Residues 246-270 (LESGDPEADPASEKLQASAPSLTPI) form a disordered region.

It belongs to the connexin family. Beta-type (group I) subfamily. In terms of assembly, a connexon is composed of a hexamer of connexins. Interacts with CNST.

It is found in the cell membrane. The protein resides in the cell junction. Its subcellular location is the gap junction. Its function is as follows. One gap junction consists of a cluster of closely packed pairs of transmembrane channels, the connexons, through which materials of low MW diffuse from one cell to a neighboring cell. The protein is Gap junction beta-3 protein (Gjb3) of Mus musculus (Mouse).